The sequence spans 246 residues: Probable transcriptional regulatory protein Dole_0371 (246 aa).

This sequence belongs to the TACO1 family.

It is found in the cytoplasm. In Desulfosudis oleivorans (strain DSM 6200 / JCM 39069 / Hxd3) (Desulfococcus oleovorans), this protein is Probable transcriptional regulatory protein Dole_0371.